The chain runs to 412 residues: MPHFDCLIVGGGHAGAQAAILLRQLKFEGTVGLISGETEYPYERPPLSKDYLAGEKIFDRILLRPRNFWGDQGIELFLGERVKALQPAEHSLTTASGAEFTYGKLIWAGGGVARRLSCPGGTAKGLFTVRTRADVDAVMAVLPQAERFAIVGGGYIGLEAAAVLSKLGKQVTLIEALDRVLARVAGPELSAFFEDEHRAHGVDVRLACGVEAIEADEQDRATGVRLADGTIIPTDAVIVGIGIVPETGPLLLAGASGGNGVDVDEYCLTSLPDVYAIGDCAAHENRFAEGRRVRVESVQNANDQARTAVQHIIGTPAPYDAVPWFWSNQYDLRLQTVGLAVAHDERVVRGDPATRSFSVVYLRQGHVVALDCVNRTKDYVQGRALVVDGTRVDRDRLADADTPLKELTAAQG.

Residues A14, K49, V82, R130, D279, and V298 each coordinate FAD.

It belongs to the FAD-dependent oxidoreductase family. Monomer. The three-component monooxygenase is composed of an oxygenase (LigXa), a ferredoxin (LigXc) and a ferredoxin reductase (LigXd). It depends on FAD as a cofactor.

The enzyme catalyses 5,5'-dehydrodivanillate + NADH + O2 + H(+) = 2,2',3-trihydroxy-3'-methoxy-5,5'-dicarboxybiphenyl + formaldehyde + NAD(+) + H2O. Functionally, involved in the catabolism of 5,5'-dehydrodivanillate (DDVA), an intermediate in the biodegradation of lignin. Part of a three-component monooxygenase that catalyzes the O-demethylation of DDVA, leading to the formation of 2,2',3-trihydroxy-3'-methoxy-5,5'-dicarboxybiphenyl (OH-DDVA). LigXd probably transfers the electrons from NADH to LigXc. In Sphingobium sp. (strain NBRC 103272 / SYK-6), this protein is 5,5'-dehydrodivanillate O-demethylase ferredoxin reductase subunit.